Reading from the N-terminus, the 81-residue chain is Neuronatin (81 aa).

This sequence belongs to the neuronatin family.

In terms of biological role, may participate in the maintenance of segment identity in the hindbrain and pituitary development, and maturation or maintenance of the overall structure of the nervous system. May function as a regulatory subunit of ion channels. This chain is Neuronatin (NNAT), found in Sus scrofa (Pig).